Here is a 256-residue protein sequence, read N- to C-terminus: Membrane-anchored junction protein (256 aa).

Residues 1 to 232 (MSLKPFTYPF…HSSPPPPKEP (232 aa)) are Nuclear-facing. Disordered stretches follow at residues 143–197 (KRKL…TPAS) and 211–235 (HGLQ…PGAR). Residues 164-173 (ETSSEASSNK) show a composition bias toward polar residues. A compositionally biased stretch (basic and acidic residues) spans 175–184 (PLKESKRSTD). Residues 233-251 (GARGFLGFLSALFPFRYFF) traverse the membrane as a helical segment. At 252 to 256 (KKSGQ) the chain is on the perinuclear space side.

Belongs to the MAJIN family. Component of the MAJIN-TERB1-TERB2 complex, composed of MAJIN, TERB1 and TERB2. In terms of tissue distribution, specifically expressed in germline tissues.

Its subcellular location is the nucleus inner membrane. The protein resides in the chromosome. It is found in the telomere. In terms of biological role, meiosis-specific telomere-associated protein involved in meiotic telomere attachment to the nucleus inner membrane, a crucial step for homologous pairing and synapsis. Component of the MAJIN-TERB1-TERB2 complex, which promotes telomere cap exchange by mediating attachment of telomeric DNA to the inner nuclear membrane and replacement of the protective cap of telomeric chromosomes: in early meiosis, the MAJIN-TERB1-TERB2 complex associates with telomeric DNA and the shelterin/telosome complex. During prophase, the complex matures and promotes release of the shelterin/telosome complex from telomeric DNA. In the complex, MAJIN acts as the anchoring subunit to the nucleus inner membrane. MAJIN shows DNA-binding activity, possibly for the stabilization of telomere attachment on the nucleus inner membrane. This Mus musculus (Mouse) protein is Membrane-anchored junction protein.